A 715-amino-acid chain; its full sequence is Protein Hook homolog 1 (715 aa).

Residues 6-122 (TVLCESLIIW…RLLQLILGCA (117 aa)) enclose the Calponin-homology (CH) domain. Coiled-coil stretches lie at residues 167-434 (AGDT…DQLL) and 463-656 (IRLQ…EEKL).

It belongs to the hook family. In terms of assembly, interacts with microtubules.

Its subcellular location is the cytoplasm. It is found in the cytoskeleton. In terms of biological role, may function to promote vesicle trafficking and/or fusion. This Danio rerio (Zebrafish) protein is Protein Hook homolog 1 (hook1).